The sequence spans 406 residues: Peptidase T (406 aa).

His-81 contacts Zn(2+). Asp-83 is an active-site residue. Asp-142 lines the Zn(2+) pocket. Catalysis depends on Glu-176, which acts as the Proton acceptor. Residues Glu-177, Asp-199, and His-381 each coordinate Zn(2+).

Belongs to the peptidase M20B family. The cofactor is Zn(2+).

The protein resides in the cytoplasm. The enzyme catalyses Release of the N-terminal residue from a tripeptide.. In terms of biological role, cleaves the N-terminal amino acid of tripeptides. The sequence is that of Peptidase T from Streptococcus pneumoniae serotype 2 (strain D39 / NCTC 7466).